The following is a 570-amino-acid chain: Capsid vertex component 2 (570 aa).

Positions 1 to 54 (MALSGHVLIDPARLPRDTGPELMWAPSLRNSLRVSPEALELAEREAERARSERW) are interaction with major capsid protein/MCP. Positions 102–123 (QVRSPSTGGRSAPAPPSPSPAQ) are disordered.

The protein belongs to the herpesviridae CVC2 protein family. Heterodimerizes with CVC1. Interacts with major capsid protein/MCP and triplex capsid protein 1/TRX1 at the pentamer vertices. Interacts with the large tegument protein/LTP.

The protein localises to the virion. It is found in the host nucleus. In terms of biological role, capsid vertex-specific component that plays a role during viral DNA encapsidation, assuring correct genome cleavage and presumably stabilizing capsids that contain full-length viral genomes. Participates in the interaction between the capsid and the tegument through interaction with the large tegument protein/LTP. The chain is Capsid vertex component 2 from Homo sapiens (Human).